A 145-amino-acid polypeptide reads, in one-letter code: Large ribosomal subunit protein uL13 (145 aa).

The protein belongs to the universal ribosomal protein uL13 family. Part of the 50S ribosomal subunit.

In terms of biological role, this protein is one of the early assembly proteins of the 50S ribosomal subunit, although it is not seen to bind rRNA by itself. It is important during the early stages of 50S assembly. This chain is Large ribosomal subunit protein uL13, found in Halobacterium salinarum (strain ATCC 700922 / JCM 11081 / NRC-1) (Halobacterium halobium).